A 578-amino-acid polypeptide reads, in one-letter code: Proline--tRNA ligase (578 aa).

The protein belongs to the class-II aminoacyl-tRNA synthetase family. ProS type 1 subfamily. Homodimer.

It localises to the cytoplasm. The catalysed reaction is tRNA(Pro) + L-proline + ATP = L-prolyl-tRNA(Pro) + AMP + diphosphate. Its function is as follows. Catalyzes the attachment of proline to tRNA(Pro) in a two-step reaction: proline is first activated by ATP to form Pro-AMP and then transferred to the acceptor end of tRNA(Pro). As ProRS can inadvertently accommodate and process non-cognate amino acids such as alanine and cysteine, to avoid such errors it has two additional distinct editing activities against alanine. One activity is designated as 'pretransfer' editing and involves the tRNA(Pro)-independent hydrolysis of activated Ala-AMP. The other activity is designated 'posttransfer' editing and involves deacylation of mischarged Ala-tRNA(Pro). The misacylated Cys-tRNA(Pro) is not edited by ProRS. The polypeptide is Proline--tRNA ligase (Burkholderia ambifaria (strain ATCC BAA-244 / DSM 16087 / CCUG 44356 / LMG 19182 / AMMD) (Burkholderia cepacia (strain AMMD))).